Here is a 308-residue protein sequence, read N- to C-terminus: Isoflavone reductase homolog (308 aa).

NADP(+) is bound by residues 11 to 17 (GGTGYIG), R36, and K45. The Proton acceptor role is filled by K133. Position 137 (R137) interacts with NADP(+).

Belongs to the NmrA-type oxidoreductase family. Isoflavone reductase subfamily.

It localises to the cytoplasm. The sequence is that of Isoflavone reductase homolog from Solanum tuberosum (Potato).